Consider the following 600-residue polypeptide: Phosphoenolpyruvate carboxykinase (ATP) (600 aa).

302–309 (GLSGTGKT) provides a ligand contact to ATP.

The protein belongs to the phosphoenolpyruvate carboxykinase (ATP) family.

It carries out the reaction oxaloacetate + ATP = phosphoenolpyruvate + ADP + CO2. It participates in carbohydrate biosynthesis; gluconeogenesis. The chain is Phosphoenolpyruvate carboxykinase (ATP) (acuF) from Emericella nidulans (strain FGSC A4 / ATCC 38163 / CBS 112.46 / NRRL 194 / M139) (Aspergillus nidulans).